A 325-amino-acid polypeptide reads, in one-letter code: MAMMTTTTTTFFHPLLPANTYKSGAVASSFVSVPRSSSLQFRSLVSDSTSICGPSKFTGKNRRVSVTVSAAATTEPLTVLVTGAGGRTGQIVYKKLKERSEQFVARGLVRTKESKEKINGEDEVFIGDIRDTASIAPAVEGIDALVILTSAVPQMKPGFDPSKGGRPEFFFDDGAYPEQVDWIGQKNQIDAAKAAGVKQIVLVGSMGGTNINHPLNSIGNANILVWKRKAEQYLADSGIPYTIIRAGGLQDKDGGIRELLVGKDDELLETETRTIARADVAEVCVQALQLEEAKFKALDLASKPEGTGTPTKDFKALFTQVTTKF.

A chloroplast-targeting transit peptide spans 1-69 (MAMMTTTTTT…KNRRVSVTVS (69 aa)). Alanine 70 is subject to N-acetylalanine.

This sequence belongs to the NAD(P)-dependent epimerase/dehydratase family.

The protein localises to the plastid. It localises to the chloroplast. This is an uncharacterized protein from Arabidopsis thaliana (Mouse-ear cress).